We begin with the raw amino-acid sequence, 198 residues long: Glycerol-3-phosphate acyltransferase (198 aa).

Helical transmembrane passes span 1–21 (MNLL…GYLA), 55–75 (VFLL…YLLL), 79–99 (WQVA…WLNW), 111–131 (IFLG…IIMI), 136–156 (IVSL…FLSF), and 158–178 (GSNL…LVIW).

Belongs to the PlsY family. Probably interacts with PlsX.

Its subcellular location is the cell inner membrane. It carries out the reaction an acyl phosphate + sn-glycerol 3-phosphate = a 1-acyl-sn-glycero-3-phosphate + phosphate. Its pathway is lipid metabolism; phospholipid metabolism. Its function is as follows. Catalyzes the transfer of an acyl group from acyl-phosphate (acyl-PO(4)) to glycerol-3-phosphate (G3P) to form lysophosphatidic acid (LPA). This enzyme utilizes acyl-phosphate as fatty acyl donor, but not acyl-CoA or acyl-ACP. The chain is Glycerol-3-phosphate acyltransferase from Prochlorococcus marinus (strain NATL2A).